The chain runs to 390 residues: Ketoisovalerate reductase BEA2 (390 aa).

An NADP(+)-binding site is contributed by 70–75 (GPGNIG). Lysine 285 functions as the Proton donor in the catalytic mechanism. The substrate site is built by asparagine 289 and asparagine 293.

It belongs to the ketopantoate reductase family.

The enzyme catalyses (R)-2-hydroxy-3-methylbutanoate + NADP(+) = 3-methyl-2-oxobutanoate + NADPH + H(+). Its activity is regulated as follows. The reductase activity is increased by Mg(2+) (195%), Ca(2+) (169%) and slightly increased by K(+) (123%). The reduction activity is inhibited by Fe(2+) and Co(2+), and almost totally inhibited by Cu(2+), Mn(2+), Zn(2+) and Fe(3+) (from 3% to 9% residual activity respectively). The chelating agent EDTA had little effect, suggesting Mg(2+) and Ca(2+) are not determining factors, though they could promote the reductase enzyme activity. Ketoisovalerate reductase; part of the gene cluster that mediates the biosynthesis of beauvericin (BEA), a non-ribosomal cyclic hexadepsipeptide that shows antibiotic, antifungal, insecticidal, and cancer cell antiproliferative and antihaptotactic activity. Ketoisovalerate reductase BEA2 catalyzes the NADPH-specific reduction of ketoisovaleric acid to hydroxyisovalerate, a precursor for beauvericin biosynthesis. The nonribosomal cyclodepsipeptide synthetase BEA1 then catalyzes the formation of beauvericin via condensation and cyclization of 3 dipeptidol monomers, each composed of one unit of hydroxyisovalerate and one unit of N-methyl-phenylalanine. This chain is Ketoisovalerate reductase BEA2, found in Gibberella intermedia (Bulb rot disease fungus).